A 215-amino-acid polypeptide reads, in one-letter code: Adenylate kinase (215 aa).

10 to 15 contacts ATP; it reads GAGKGT. The NMP stretch occupies residues 30-59; that stretch reads STGDILRENVKNETELGKKAKEYMDKGLLV. Residues threonine 31, arginine 36, 57-59, 85-88, and glutamine 92 contribute to the AMP site; these read LLV and GFPR. An LID region spans residues 126-163; sequence GRRICKNCGASFHVIYRPPQKEGVCDVCGGELYQREDD. Arginine 127 serves as a coordination point for ATP. Positions 130 and 133 each coordinate Zn(2+). 136–137 contributes to the ATP binding site; it reads SF. Residues cysteine 150 and cysteine 153 each contribute to the Zn(2+) site. Positions 160 and 171 each coordinate AMP. Residue glutamine 198 participates in ATP binding.

The protein belongs to the adenylate kinase family. Monomer.

The protein resides in the cytoplasm. It carries out the reaction AMP + ATP = 2 ADP. It functions in the pathway purine metabolism; AMP biosynthesis via salvage pathway; AMP from ADP: step 1/1. Catalyzes the reversible transfer of the terminal phosphate group between ATP and AMP. Plays an important role in cellular energy homeostasis and in adenine nucleotide metabolism. The polypeptide is Adenylate kinase (Caldicellulosiruptor bescii (strain ATCC BAA-1888 / DSM 6725 / KCTC 15123 / Z-1320) (Anaerocellum thermophilum)).